The chain runs to 211 residues: MQELQYDVVLLQKIVYRNRNQHRLSVWWRHVRMLLRRLKQSLDGNEKAKIAILEQLPKSYFYFTNLIAHGQYPALGLVLLGILARVWFVMGGIEYEAKIQSEIVFSQKEQKKLELQSQDDIDTGTVVARDELLATEPISLSINPASTSYEKLTVSSPNSFLKNQDESLFLSSSPITVSQGTKRKSKNSNSTVKKKKKRARKGRDEIDDIFG.

Residues 73–93 (PALGLVLLGILARVWFVMGGI) traverse the membrane as a helical segment. Position 156 is a phosphoserine (serine 156). The tract at residues 178-211 (SQGTKRKSKNSNSTVKKKKKRARKGRDEIDDIFG) is disordered. Over residues 181–201 (TKRKSKNSNSTVKKKKKRARK) the composition is skewed to basic residues.

In terms of assembly, component of RNase MRP complex which consists of an RNA moiety and at least 10 protein subunits.

Its subcellular location is the membrane. It localises to the nucleus. The protein resides in the nucleolus. Functionally, functions as part of ribonuclease MRP (RNase MRP), which is involved in rRNA processing in mitochondria. The polypeptide is Ribonuclease MRP protein subunit rmp1 (Schizosaccharomyces pombe (strain 972 / ATCC 24843) (Fission yeast)).